Reading from the N-terminus, the 186-residue chain is Archaemetzincin (186 aa).

Residue H136 coordinates Zn(2+). E137 (proton acceptor) is an active-site residue. H140, H146, C147, C152, C171, and C174 together coordinate Zn(2+).

It belongs to the peptidase M54 family. In terms of assembly, monomer. It depends on Zn(2+) as a cofactor.

In terms of biological role, probable zinc metalloprotease whose natural substrate is unknown. This is Archaemetzincin from Thermococcus kodakarensis (strain ATCC BAA-918 / JCM 12380 / KOD1) (Pyrococcus kodakaraensis (strain KOD1)).